The following is a 202-amino-acid chain: Protein-methionine-sulfoxide reductase heme-binding subunit MsrQ (202 aa).

6 helical membrane passes run 8–28, 42–62, 75–95, 110–130, 147–167, and 169–189; these read LAVF…AWIF, LGLG…LQKL, LGLW…VFIL, PYII…ITSN, LVYL…RADL, and EWTL…PSIA.

This sequence belongs to the MsrQ family. In terms of assembly, heterodimer of a catalytic subunit (MsrP) and a heme-binding subunit (MsrQ). Requires FMN as cofactor. It depends on heme b as a cofactor.

Its subcellular location is the cell inner membrane. In terms of biological role, part of the MsrPQ system that repairs oxidized periplasmic proteins containing methionine sulfoxide residues (Met-O), using respiratory chain electrons. Thus protects these proteins from oxidative-stress damage caused by reactive species of oxygen and chlorine generated by the host defense mechanisms. MsrPQ is essential for the maintenance of envelope integrity under bleach stress, rescuing a wide series of structurally unrelated periplasmic proteins from methionine oxidation. MsrQ provides electrons for reduction to the reductase catalytic subunit MsrP, using the quinone pool of the respiratory chain. This Pseudomonas aeruginosa (strain UCBPP-PA14) protein is Protein-methionine-sulfoxide reductase heme-binding subunit MsrQ.